A 650-amino-acid polypeptide reads, in one-letter code: Probable LIM domain-containing serine/threonine-protein kinase DDB_G0287001 (650 aa).

2 LIM zinc-binding domains span residues 4–63 (NNCG…KLNA) and 64–122 (RKCF…PSDK). Disordered stretches follow at residues 118-138 (KPSDKTKTTTPPPSEIPLPGK), 171-197 (LSSSGGSGNSISGSGGTNTGSSTSSFM), and 293-320 (LLNSSSPSPSTSSTSSTSSISQSQNLNT). The segment covering 173–188 (SSGGSGNSISGSGGTN) has biased composition (gly residues). Residues 386–643 (VAFGDVIASG…DTLKKISESL (258 aa)) form the Protein kinase domain. ATP is bound by residues 392 to 400 (IASGASGKV) and Lys413. Asp509 functions as the Proton acceptor in the catalytic mechanism.

This sequence belongs to the protein kinase superfamily. TKL Ser/Thr protein kinase family.

The catalysed reaction is L-seryl-[protein] + ATP = O-phospho-L-seryl-[protein] + ADP + H(+). The enzyme catalyses L-threonyl-[protein] + ATP = O-phospho-L-threonyl-[protein] + ADP + H(+). In Dictyostelium discoideum (Social amoeba), this protein is Probable LIM domain-containing serine/threonine-protein kinase DDB_G0287001.